Reading from the N-terminus, the 152-residue chain is uncharacterized protein (152 aa).

5 helical membrane-spanning segments follow: residues 2–22 (GVVFAFGFYLIFIKLTGLKLM), 33–53 (LKMIFSILSVILAFLINWLIM), 58–78 (FLIEIIHPIASVWIFIILIYL), 97–117 (FMGNMSAIAIFLELLKIIEYV), and 122–142 (IASPITVALVFFIPVVVFFNC).

The protein localises to the cell membrane. This is an uncharacterized protein from Methanocaldococcus jannaschii (strain ATCC 43067 / DSM 2661 / JAL-1 / JCM 10045 / NBRC 100440) (Methanococcus jannaschii).